The sequence spans 268 residues: Ribosomal RNA small subunit methyltransferase A (268 aa).

S-adenosyl-L-methionine contacts are provided by Asn-12, Leu-14, Gly-38, Glu-59, Asp-82, and Asn-107.

Belongs to the class I-like SAM-binding methyltransferase superfamily. rRNA adenine N(6)-methyltransferase family. RsmA subfamily.

It localises to the cytoplasm. The enzyme catalyses adenosine(1518)/adenosine(1519) in 16S rRNA + 4 S-adenosyl-L-methionine = N(6)-dimethyladenosine(1518)/N(6)-dimethyladenosine(1519) in 16S rRNA + 4 S-adenosyl-L-homocysteine + 4 H(+). Functionally, specifically dimethylates two adjacent adenosines (A1518 and A1519) in the loop of a conserved hairpin near the 3'-end of 16S rRNA in the 30S particle. May play a critical role in biogenesis of 30S subunits. This chain is Ribosomal RNA small subunit methyltransferase A, found in Aster yellows witches'-broom phytoplasma (strain AYWB).